The sequence spans 354 residues: 4-hydroxy-2-oxovalerate aldolase 5 (354 aa).

Residues 11–263 (VTVHDMCLRD…ETGCDLFKLM (253 aa)) enclose the Pyruvate carboxyltransferase domain. 19–20 (RD) contributes to the substrate binding site. Residue Asp-20 participates in Mn(2+) binding. The active-site Proton acceptor is the His-23. Residues Ser-173 and His-202 each coordinate substrate. The Mn(2+) site is built by His-202 and His-204. A substrate-binding site is contributed by Tyr-293.

Belongs to the 4-hydroxy-2-oxovalerate aldolase family.

The enzyme catalyses (S)-4-hydroxy-2-oxopentanoate = acetaldehyde + pyruvate. In Dechloromonas aromatica (strain RCB), this protein is 4-hydroxy-2-oxovalerate aldolase 5.